The following is a 567-amino-acid chain: 2-succinyl-5-enolpyruvyl-6-hydroxy-3-cyclohexene-1-carboxylate synthase (567 aa).

Belongs to the TPP enzyme family. MenD subfamily. Homodimer. The cofactor is Mg(2+). Requires Mn(2+) as cofactor. It depends on thiamine diphosphate as a cofactor.

It carries out the reaction isochorismate + 2-oxoglutarate + H(+) = 5-enolpyruvoyl-6-hydroxy-2-succinyl-cyclohex-3-ene-1-carboxylate + CO2. It functions in the pathway quinol/quinone metabolism; 1,4-dihydroxy-2-naphthoate biosynthesis; 1,4-dihydroxy-2-naphthoate from chorismate: step 2/7. The protein operates within quinol/quinone metabolism; menaquinone biosynthesis. Functionally, catalyzes the thiamine diphosphate-dependent decarboxylation of 2-oxoglutarate and the subsequent addition of the resulting succinic semialdehyde-thiamine pyrophosphate anion to isochorismate to yield 2-succinyl-5-enolpyruvyl-6-hydroxy-3-cyclohexene-1-carboxylate (SEPHCHC). This chain is 2-succinyl-5-enolpyruvyl-6-hydroxy-3-cyclohexene-1-carboxylate synthase, found in Yersinia pseudotuberculosis serotype O:1b (strain IP 31758).